Here is a 412-residue protein sequence, read N- to C-terminus: Multifunctional CCA protein (412 aa).

ATP-binding residues include G8 and R11. CTP contacts are provided by G8 and R11. Residues D21 and D23 each contribute to the Mg(2+) site. Positions 91, 137, and 140 each coordinate ATP. R91, R137, and R140 together coordinate CTP. The region spanning 228–329 is the HD domain; that stretch reads TGIHTLMTLS…VKLFDSIDAW (102 aa).

It belongs to the tRNA nucleotidyltransferase/poly(A) polymerase family. Bacterial CCA-adding enzyme type 1 subfamily. In terms of assembly, monomer. Can also form homodimers and oligomers. Mg(2+) is required as a cofactor. The cofactor is Ni(2+).

The enzyme catalyses a tRNA precursor + 2 CTP + ATP = a tRNA with a 3' CCA end + 3 diphosphate. The catalysed reaction is a tRNA with a 3' CCA end + 2 CTP + ATP = a tRNA with a 3' CCACCA end + 3 diphosphate. Its function is as follows. Catalyzes the addition and repair of the essential 3'-terminal CCA sequence in tRNAs without using a nucleic acid template. Adds these three nucleotides in the order of C, C, and A to the tRNA nucleotide-73, using CTP and ATP as substrates and producing inorganic pyrophosphate. tRNA 3'-terminal CCA addition is required both for tRNA processing and repair. Also involved in tRNA surveillance by mediating tandem CCA addition to generate a CCACCA at the 3' terminus of unstable tRNAs. While stable tRNAs receive only 3'-terminal CCA, unstable tRNAs are marked with CCACCA and rapidly degraded. The polypeptide is Multifunctional CCA protein (Shigella sonnei (strain Ss046)).